Consider the following 149-residue polypeptide: D-aminoacyl-tRNA deacylase (149 aa).

Residues Gly-137 to Pro-138 carry the Gly-cisPro motif, important for rejection of L-amino acids motif.

It belongs to the DTD family. As to quaternary structure, homodimer.

It localises to the cytoplasm. It carries out the reaction glycyl-tRNA(Ala) + H2O = tRNA(Ala) + glycine + H(+). The catalysed reaction is a D-aminoacyl-tRNA + H2O = a tRNA + a D-alpha-amino acid + H(+). Its function is as follows. An aminoacyl-tRNA editing enzyme that deacylates mischarged D-aminoacyl-tRNAs. Also deacylates mischarged glycyl-tRNA(Ala), protecting cells against glycine mischarging by AlaRS. Acts via tRNA-based rather than protein-based catalysis; rejects L-amino acids rather than detecting D-amino acids in the active site. By recycling D-aminoacyl-tRNA to D-amino acids and free tRNA molecules, this enzyme counteracts the toxicity associated with the formation of D-aminoacyl-tRNA entities in vivo and helps enforce protein L-homochirality. The chain is D-aminoacyl-tRNA deacylase from Desulforudis audaxviator (strain MP104C).